The chain runs to 156 residues: Aspartate carbamoyltransferase regulatory chain (156 aa).

Zn(2+) is bound by residues Cys-110, Cys-115, Cys-140, and Cys-143.

Belongs to the PyrI family. As to quaternary structure, contains catalytic and regulatory chains. Zn(2+) serves as cofactor.

In terms of biological role, involved in allosteric regulation of aspartate carbamoyltransferase. The chain is Aspartate carbamoyltransferase regulatory chain from Methanocella arvoryzae (strain DSM 22066 / NBRC 105507 / MRE50).